A 152-amino-acid polypeptide reads, in one-letter code: Deoxyuridine 5'-triphosphate nucleotidohydrolase (152 aa).

Residues 62–64 (RSG), Asn-75, and 79–81 (TVD) contribute to the substrate site.

It belongs to the dUTPase family. Requires Mg(2+) as cofactor.

The catalysed reaction is dUTP + H2O = dUMP + diphosphate + H(+). It functions in the pathway pyrimidine metabolism; dUMP biosynthesis; dUMP from dCTP (dUTP route): step 2/2. This enzyme is involved in nucleotide metabolism: it produces dUMP, the immediate precursor of thymidine nucleotides and it decreases the intracellular concentration of dUTP so that uracil cannot be incorporated into DNA. The sequence is that of Deoxyuridine 5'-triphosphate nucleotidohydrolase from Leifsonia xyli subsp. xyli (strain CTCB07).